Reading from the N-terminus, the 143-residue chain is Transcriptional regulator MraZ (143 aa).

SpoVT-AbrB domains follow at residues 5–47 (EYNH…SSDE) and 76–119 (ASEC…SNVE).

The protein belongs to the MraZ family. As to quaternary structure, forms oligomers.

Its subcellular location is the cytoplasm. It localises to the nucleoid. This chain is Transcriptional regulator MraZ, found in Alkaliphilus oremlandii (strain OhILAs) (Clostridium oremlandii (strain OhILAs)).